The sequence spans 276 residues: Large ribosomal subunit protein uL2 (276 aa).

Residues 223–276 form a disordered region; sequence GAAMNPVDHPHGGGEGRAPRGRPPASPWGWQTKGLKTRKRRKPSSRFIIARRKK. The segment covering 230-240 has biased composition (basic and acidic residues); the sequence is DHPHGGGEGRA. Basic residues predominate over residues 257–276; the sequence is LKTRKRRKPSSRFIIARRKK.

The protein belongs to the universal ribosomal protein uL2 family. As to quaternary structure, part of the 50S ribosomal subunit. Forms a bridge to the 30S subunit in the 70S ribosome.

In terms of biological role, one of the primary rRNA binding proteins. Required for association of the 30S and 50S subunits to form the 70S ribosome, for tRNA binding and peptide bond formation. It has been suggested to have peptidyltransferase activity; this is somewhat controversial. Makes several contacts with the 16S rRNA in the 70S ribosome. This is Large ribosomal subunit protein uL2 from Thermus thermophilus (strain ATCC BAA-163 / DSM 7039 / HB27).